The primary structure comprises 81 residues: Putative membrane protein insertion efficiency factor (81 aa).

Residues 59 to 81 are disordered; the sequence is PWNPGGYDPVPPIKTSRSSSMAE.

This sequence belongs to the UPF0161 family.

It is found in the cell inner membrane. Functionally, could be involved in insertion of integral membrane proteins into the membrane. In Azotobacter vinelandii (strain DJ / ATCC BAA-1303), this protein is Putative membrane protein insertion efficiency factor.